The following is a 661-amino-acid chain: Cartilage acidic protein 1 (661 aa).

Residues 1–27 form the signal peptide; sequence MAPSADPGMSRMLPFLLLLWFLPITEG. One copy of the FG-GAP 1; atypical repeat lies at 46–88; it reads DYDSNPTQLNYGVAVTDVDHDGDFEIVVAGYNGPNLVLKYDRA. An FG-GAP 2; atypical repeat occupies 105-147; the sequence is YALRDRQGNAIGVTACDIDGDGREEIYFLNTNNAFSGVATYTD. The stretch at 283 to 333 is one FG-GAP 3; atypical repeat; it reads AGVDDPHQHGRGVALADFNRDGKVDIVYGNWNGPHRLYLQMSTHGKVRFRD. One copy of the FG-GAP 4; atypical repeat lies at 395 to 437; the sequence is GDALEPEGRGTGGVVTDFDGDGMLDLILSHGESMAQPLSVFRG. Residues 559–605 form the EGF-like domain; the sequence is DTNECIQFPFVCPRDKPVCVNTYGSYRCRTNKKCSRGYEPNEDGTAC. 3 disulfide bridges follow: Cys563–Cys577, Cys570–Cys586, and Cys592–Cys605. Thr608, Thr618, Thr619, Thr621, and Thr626 each carry an O-linked (GalNAc...) threonine glycan.

O-glycosylated. In terms of tissue distribution, expressed in the interterritorial matrix of articular deep zone cartilage (at protein level). Isoform 1 and isoform 2 are expressed in brain. Isoform 1 is detected in lung and chondrocytes. Detected in cartilage, bone, cultured chondrocytes and lung, and at low levels in heart. Not detected in osteoblasts.

It localises to the secreted. Its subcellular location is the extracellular space. The protein resides in the extracellular matrix. The protein is Cartilage acidic protein 1 (CRTAC1) of Homo sapiens (Human).